The primary structure comprises 117 residues: Large ribosomal subunit protein uL18 (117 aa).

This sequence belongs to the universal ribosomal protein uL18 family. In terms of assembly, part of the 50S ribosomal subunit; part of the 5S rRNA/L5/L18/L25 subcomplex. Contacts the 5S and 23S rRNAs.

Functionally, this is one of the proteins that bind and probably mediate the attachment of the 5S RNA into the large ribosomal subunit, where it forms part of the central protuberance. In Francisella tularensis subsp. novicida (strain U112), this protein is Large ribosomal subunit protein uL18.